Here is a 504-residue protein sequence, read N- to C-terminus: Light-independent protochlorophyllide reductase subunit B (504 aa).

[4Fe-4S] cluster is bound at residue D36. The Proton donor role is filled by D279. 414 to 415 serves as a coordination point for substrate; that stretch reads GL.

The protein belongs to the ChlB/BchB/BchZ family. Protochlorophyllide reductase is composed of three subunits; BchL, BchN and BchB. Forms a heterotetramer of two BchB and two BchN subunits. The cofactor is [4Fe-4S] cluster.

It catalyses the reaction chlorophyllide a + oxidized 2[4Fe-4S]-[ferredoxin] + 2 ADP + 2 phosphate = protochlorophyllide a + reduced 2[4Fe-4S]-[ferredoxin] + 2 ATP + 2 H2O. It participates in porphyrin-containing compound metabolism; bacteriochlorophyll biosynthesis (light-independent). Component of the dark-operative protochlorophyllide reductase (DPOR) that uses Mg-ATP and reduced ferredoxin to reduce ring D of protochlorophyllide (Pchlide) to form chlorophyllide a (Chlide). This reaction is light-independent. The NB-protein (BchN-BchB) is the catalytic component of the complex. In Acidiphilium rubrum, this protein is Light-independent protochlorophyllide reductase subunit B.